A 295-amino-acid polypeptide reads, in one-letter code: Ribosome production factor 1 (295 aa).

Residues H24–L47 are disordered. The span at A38–L47 shows a compositional bias: basic and acidic residues. Residues P93–E276 enclose the Brix domain. Residues V254–Q271 are RNA-binding.

Part of a complex that includes BRX1, RPF1, RPF2 and SSF1 or SSF2.

It is found in the nucleus. The protein localises to the nucleolus. Essential protein. Required for biogenesis of the 60S ribosomal subunit. The protein is Ribosome production factor 1 (RPF1) of Saccharomyces cerevisiae (strain ATCC 204508 / S288c) (Baker's yeast).